Consider the following 348-residue polypeptide: Sensor protein VraS (348 aa).

Helical transmembrane passes span 13–33 and 43–63; these read ILVY…VNII and IFGI…CIIV. Residues 150–341 form the Histidine kinase domain; it reads RLARELHDSV…RIEVKAPLNK (192 aa).

It localises to the cell membrane. It catalyses the reaction ATP + protein L-histidine = ADP + protein N-phospho-L-histidine.. Functionally, member of the two-component regulatory system VraS/VraR involved in the control of the cell wall peptidoglycan biosynthesis. Probably activates VraR by phosphorylation. The sequence is that of Sensor protein VraS (vraS) from Staphylococcus epidermidis (strain ATCC 35984 / DSM 28319 / BCRC 17069 / CCUG 31568 / BM 3577 / RP62A).